The primary structure comprises 1387 residues: Kinesin-like protein KIF15 (1387 aa).

The disordered stretch occupies residues 1-23 (MAPGCKSELRNVTNSHSNQPSNE). Polar residues predominate over residues 10–22 (RNVTNSHSNQPSN). The 338-residue stretch at 26-363 (AIKVFVRIRP…LNFAQRAKLI (338 aa)) folds into the Kinesin motor domain. Residue 109 to 116 (GQTGSGKT) participates in ATP binding. A coiled-coil region spans residues 368–1132 (VVNEDTQGNV…LKMRQLEHVM (765 aa)). Phosphoserine is present on Ser568. Lys1009 carries the N6-acetyllysine modification. 2 positions are modified to phosphoserine: Ser1141 and Ser1169.

It belongs to the TRAFAC class myosin-kinesin ATPase superfamily. Kinesin family. KLP2 subfamily. As to quaternary structure, interacts with MKI67 and TPX2. As to expression, expressed in brain (neurons in the external germinal layer of the cerebellum and in ventricular zones) (at protein level). Expressed in spleen and testis.

The protein resides in the cytoplasm. The protein localises to the cytoskeleton. Its subcellular location is the spindle. In terms of biological role, plus-end directed kinesin-like motor enzyme involved in mitotic spindle assembly. The chain is Kinesin-like protein KIF15 (Kif15) from Mus musculus (Mouse).